A 292-amino-acid polypeptide reads, in one-letter code: Ribonuclease T2-like (292 aa).

The first 23 residues, 1-23, serve as a signal peptide directing secretion; that stretch reads MAKTASAMLFLYLLLSRCLLSHA. 5 cysteine pairs are disulfide-bonded: C42-C61, C50-C103, C60-C177, C111-C169, and C246-C280. A glycan (N-linked (GlcNAc...) asparagine) is linked at N52. Catalysis depends on residues H96, E162, and H166.

It belongs to the RNase T2 family.

It is found in the vacuole lumen. The protein resides in the cytoplasm. The catalysed reaction is a ribonucleotidyl-ribonucleotide-RNA + H2O = a 3'-end 3'-phospho-ribonucleotide-RNA + a 5'-end dephospho-ribonucleoside-RNA + H(+). Rnase which modulates cell survival under stress conditions. Released from the vacuole to the cytoplasm during stress to promote tRNA and rRNA cleavage and to activate separately a downstream pathway that promotes cell death. Involved in cell size, vacuolar morphology and growth at high temperatures and high salt concentration. This chain is Ribonuclease T2-like (RNY1), found in Eremothecium gossypii (strain ATCC 10895 / CBS 109.51 / FGSC 9923 / NRRL Y-1056) (Yeast).